Here is a 103-residue protein sequence, read N- to C-terminus: Co-chaperonin GroES (103 aa).

The disordered stretch occupies residues 31–67 (GGILLPDTAKEKPQVGEVAQVGPGKRNEDGSRQSPEV).

The protein belongs to the GroES chaperonin family. As to quaternary structure, heptamer of 7 subunits arranged in a ring. Interacts with the chaperonin GroEL.

It is found in the cytoplasm. In terms of biological role, together with the chaperonin GroEL, plays an essential role in assisting protein folding. The GroEL-GroES system forms a nano-cage that allows encapsulation of the non-native substrate proteins and provides a physical environment optimized to promote and accelerate protein folding. GroES binds to the apical surface of the GroEL ring, thereby capping the opening of the GroEL channel. In Prochlorococcus marinus (strain NATL2A), this protein is Co-chaperonin GroES.